The following is a 459-amino-acid chain: Heat stress transcription factor A-4d (459 aa).

Residues 127 to 189 (AESERRELEE…QKNIVASLCE (63 aa)) adopt a coiled-coil conformation. Residues 141 to 191 (LKYEKSILVADLQRQNQQQYVINWQMQAMEGRLVAMEQRQKNIVASLCEML) are hydrophobic repeat HR-A/B. The short motif at 209 to 213 (SKKRR) is the Nuclear localization signal element. Positions 364–388 (YPTQADVNSEIASSTDTSQDGTSET) are enriched in polar residues. The tract at residues 364 to 398 (YPTQADVNSEIASSTDTSQDGTSETEASHGPTNDV) is disordered. The AHA motif lies at 397–406 (DVFWERFLTE).

This sequence belongs to the HSF family. Class A subfamily. As to quaternary structure, homotrimer. Exhibits temperature-dependent phosphorylation.

Its subcellular location is the nucleus. Functionally, transcriptional regulator that specifically binds DNA of heat shock promoter elements (HSE). The polypeptide is Heat stress transcription factor A-4d (HSFA4D) (Oryza sativa subsp. japonica (Rice)).